The sequence spans 632 residues: METPAAAAPAGSLFPSFLLLACGTLVAALLGAAHRLGLFYQLLHKVDKASVRHGGENVAAVLRAHGVRFIFTLVGGHISPLLVACEKLGIRVVDTRHEVTAVFAADAMARLSGTVGVAAVTAGPGLTNTVTAVKNAQMAQSPILLLGGAASTLLQNRGALQAVDQLSLFRPLCKFCVSVRRVRDIVPTLRAAMAAAQSGTPGPVFVELPVDVLYPYFMVQKEMVPAKPPKGLVGRVVSWYLENYLANLFAGAWEPQPEGPLPLDIPQASPQQVQRCVEILSRAKRPLMVLGSQALLTPTSADKLRAAVETLGVPCFLGGMARGLLGRNHPLHIRENRSAALKKADVIVLAGTVCDFRLSYGRVLSHSSKIIIVNRNREEMLLNSDIFWKPQEAVQGDVGSFVLKLVEGLQGQTWAPDWVEELREADRQKEQTFREKAAMPVAQHLNPVQVLQLVEETLPDNSILVVDGGDFVGTAAHLVQPRGPLRWLDPGAFGTLGVGAGFALGAKLCRPDAEVWCLFGDGAFGYSLIEFDTFVRHKIPVMALVGNDAGWTQISREQVPSLGSNVACGLAYTDYHKAAMGLGARGLLLSRENEDQVVKVLHDAQQQCRDGHPVVVNILIGRTDFRDGSIAV.

A helical membrane pass occupies residues 13-33; the sequence is LFPSFLLLACGTLVAALLGAA. Glu-98 provides a ligand contact to thiamine diphosphate. The tract at residues 470 to 550 is thiamine pyrophosphate binding; the sequence is DFVGTAAHLV…VMALVGNDAG (81 aa). Mg(2+) is bound by residues Asp-521 and Asn-547.

The protein belongs to the TPP enzyme family. Mg(2+) serves as cofactor. It depends on thiamine diphosphate as a cofactor. In terms of tissue distribution, expressed in all tissues tested, with highest expression in heart, pancreas and placenta.

It localises to the endoplasmic reticulum membrane. The enzyme catalyses 2-hydroxyoctadecanoyl-CoA = heptadecanal + formyl-CoA. The catalysed reaction is (2R)-hydroxyhexadecanoyl-CoA = pentadecanal + formyl-CoA. Functionally, endoplasmic reticulum 2-OH acyl-CoA lyase involved in the cleavage (C1 removal) reaction in the fatty acid alpha-oxydation in a thiamine pyrophosphate (TPP)-dependent manner. Involved in the phytosphingosine degradation pathway. In Homo sapiens (Human), this protein is 2-hydroxyacyl-CoA lyase 2.